Reading from the N-terminus, the 339-residue chain is Phenylalanine--tRNA ligase alpha subunit (339 aa).

Mg(2+) is bound at residue Glu-254.

This sequence belongs to the class-II aminoacyl-tRNA synthetase family. Phe-tRNA synthetase alpha subunit type 1 subfamily. As to quaternary structure, tetramer of two alpha and two beta subunits. The cofactor is Mg(2+).

Its subcellular location is the cytoplasm. It carries out the reaction tRNA(Phe) + L-phenylalanine + ATP = L-phenylalanyl-tRNA(Phe) + AMP + diphosphate + H(+). This is Phenylalanine--tRNA ligase alpha subunit from Clostridium botulinum (strain ATCC 19397 / Type A).